The following is a 164-amino-acid chain: MMKEFSSTAQGNTEVIHTGTLQRHESHHIRDFCFQEIEKDIHNFEFQWQEEERNGHEAPMTEIKELTGSTDRHDQRHAGNKPIKDQLGSSFHSHLPELHIFQPEWKIGNQVEKSIINASLILTSQRISCSPKTRISNNYGNNSLHSSLPIQKLGSTHERKIFPM.

The sequence is that of Putative protein ZNF321 (ZNF321P) from Homo sapiens (Human).